The primary structure comprises 459 residues: Cysteine--tRNA ligase (459 aa).

Cysteine 28 contacts Zn(2+). Positions 30-40 match the 'HIGH' region motif; it reads ITIYDLCHIGH. Residues cysteine 209, histidine 234, and glutamate 238 each contribute to the Zn(2+) site. A 'KMSKS' region motif is present at residues 266-270; sequence KMSKS. Residue lysine 269 participates in ATP binding.

This sequence belongs to the class-I aminoacyl-tRNA synthetase family. As to quaternary structure, monomer. Requires Zn(2+) as cofactor.

The protein resides in the cytoplasm. The enzyme catalyses tRNA(Cys) + L-cysteine + ATP = L-cysteinyl-tRNA(Cys) + AMP + diphosphate. This chain is Cysteine--tRNA ligase, found in Shewanella denitrificans (strain OS217 / ATCC BAA-1090 / DSM 15013).